The following is an 878-amino-acid chain: Coatomer subunit gamma (878 aa).

6 HEAT repeats span residues 64 to 101 (REAT…VAED), 287 to 324 (RMLS…THPA), 326 to 359 (VTTC…GAES), 360 to 396 (SVER…KYPR), 399 to 434 (TVLM…ENAD), and 471 to 508 (ATPS…SCPA).

Belongs to the COPG family. As to quaternary structure, oligomeric complex that consists of at least the alpha, beta, beta', gamma, delta, epsilon and zeta subunits.

It localises to the cytoplasm. The protein localises to the golgi apparatus membrane. It is found in the cytoplasmic vesicle. Its subcellular location is the COPI-coated vesicle membrane. The protein resides in the endoplasmic reticulum. Its function is as follows. The coatomer is a cytosolic protein complex that binds to dilysine motifs and reversibly associates with Golgi non-clathrin-coated vesicles, which further mediate biosynthetic protein transport from the ER, via the Golgi up to the trans Golgi network. Coatomer complex is required for budding from Golgi membranes, and is essential for the retrograde Golgi-to-ER transport of dilysine-tagged proteins. Required for limiting lipid storage in lipid droplets. Involved in the expansion of luminal extracellular matrices and apical membrane during tubulogenesis. Required in the tracheal epithelium for luminal protein secretion and diametric tube growth. In salivary glands, required for deposition of O-glycans and luminal extracellular matrix assembly. Required for epidermal morphogenesis and cuticle development. This chain is Coatomer subunit gamma, found in Drosophila pseudoobscura pseudoobscura (Fruit fly).